The primary structure comprises 910 residues: ZZ-type zinc finger-containing protein 3 (910 aa).

Disordered regions lie at residues 41-117 and 133-153; these read AHPE…RQAE and EATNSSEEDSPVKPDKEPGEH. The span at 67–84 shows a compositional bias: polar residues; that stretch reads QKGTNNGRTSDVRQQSAR. Residues S89, S96, S137, S138, and S142 each carry the phosphoserine modification. Residues 96–116 show a composition bias toward basic and acidic residues; it reads SSSEKDDLERQALESCERRQA. Residues 142–153 show a composition bias toward basic and acidic residues; the sequence is SPVKPDKEPGEH. A Glycyl lysine isopeptide (Lys-Gly) (interchain with G-Cter in SUMO2) cross-link involves residue K283. Disordered stretches follow at residues 303–358, 373–444, and 609–641; these read TAES…VSGE, TSLS…PQDG, and ARPKSPLDPKKDGESLSYSMLPLSDGPEGSHNR. 2 stretches are compositionally biased toward polar residues: residues 331 to 347 and 397 to 434; these read SSASKEQCNENSSNPLD and SSPTKTTSPYRENGQLEETNLSPQETNTTVSDHVSESP. K401 carries the N6-acetyllysine modification. At S613 the chain carries Phosphoserine. Positions 613–622 are enriched in basic and acidic residues; the sequence is SPLDPKKDGE. K654 is covalently cross-linked (Glycyl lysine isopeptide (Lys-Gly) (interchain with G-Cter in SUMO2)). The region spanning 654–714 is the HTH myb-type domain; that stretch reads KPETFNQLWT…RVQKYFIKLT (61 aa). Residues 687 to 710 constitute a DNA-binding region (H-T-H motif); it reads WQKIADELGNRTAKQVASRVQKYF. An N6-acetyllysine modification is found at K708. K715 is covalently cross-linked (Glycyl lysine isopeptide (Lys-Gly) (interchain with G-Cter in SUMO2)). The ZZ-type zinc-finger motif lies at 825-884; sequence HVGFKCDNCGVEPIQGVRWHCQDCPPEMSLDFCDSCSDCPHETDIHKEDHQLEPVYKSET. Zn(2+) is bound by residues C830, C833, C845, C848, C857, C860, H870, and H874.

Component of the ADA2A-containing complex (ATAC), composed of KAT14, KAT2A, TADA2L, TADA3L, ZZ3, MBIP, WDR5, YEATS2, CCDC101 and DR1. Interacts via (ZZ-type zinc finger) with histone H3 in a methylation-independent manner and acetylation on 'Lys-4' (H3K4ac) moderately enhances the interaction.

Its subcellular location is the nucleus. Its function is as follows. Histone H3 reader that is required for the ATAC complex-mediated maintenance of histone acetylation and gene activation. Component of the ATAC complex, a complex with histone acetyltransferase activity on histones H3 and H4. This Mus musculus (Mouse) protein is ZZ-type zinc finger-containing protein 3 (Zzz3).